The primary structure comprises 1189 residues: Pesticidal crystal protein Cry1Ca (1189 aa).

It belongs to the delta endotoxin family.

Its function is as follows. Promotes colloidosmotic lysis by binding to the midgut epithelial cells of many lepidopteran larvae including Spodoptera species. This is Pesticidal crystal protein Cry1Ca (cry1Ca) from Bacillus thuringiensis subsp. entomocidus.